Reading from the N-terminus, the 182-residue chain is Mu-like prophage FluMu protein gp45 (182 aa).

A disordered region spans residues 159–182 (TDHQSSGISGKNHDHEERVGKPVP). Over residues 169–182 (KNHDHEERVGKPVP) the composition is skewed to basic and acidic residues.

To phage Mu protein gp45.

This Haemophilus influenzae (strain ATCC 51907 / DSM 11121 / KW20 / Rd) protein is Mu-like prophage FluMu protein gp45.